Here is a 438-residue protein sequence, read N- to C-terminus: 3-phosphoshikimate 1-carboxyvinyltransferase (438 aa).

3-phosphoshikimate contacts are provided by K23, S24, and R28. K23 provides a ligand contact to phosphoenolpyruvate. Residues G94 and R122 each coordinate phosphoenolpyruvate. Residues S167, Q169, D321, and K348 each coordinate 3-phosphoshikimate. Residue Q169 coordinates phosphoenolpyruvate. D321 functions as the Proton acceptor in the catalytic mechanism. The phosphoenolpyruvate site is built by R352 and R393.

It belongs to the EPSP synthase family. Monomer.

The protein resides in the cytoplasm. The catalysed reaction is 3-phosphoshikimate + phosphoenolpyruvate = 5-O-(1-carboxyvinyl)-3-phosphoshikimate + phosphate. The protein operates within metabolic intermediate biosynthesis; chorismate biosynthesis; chorismate from D-erythrose 4-phosphate and phosphoenolpyruvate: step 6/7. Catalyzes the transfer of the enolpyruvyl moiety of phosphoenolpyruvate (PEP) to the 5-hydroxyl of shikimate-3-phosphate (S3P) to produce enolpyruvyl shikimate-3-phosphate and inorganic phosphate. The protein is 3-phosphoshikimate 1-carboxyvinyltransferase of Helicobacter hepaticus (strain ATCC 51449 / 3B1).